The sequence spans 295 residues: bZIP transcription factor 60 (295 aa).

The interval 101-154 is disordered; that stretch reads PAAADDSGKENSDLVVEKKSNDSGSEIHDDDDEEGDDDAVAKKRRRRVRNRDAA. Residues 106-127 are compositionally biased toward basic and acidic residues; sequence DSGKENSDLVVEKKSNDSGSEI. Residues 128 to 138 show a composition bias toward acidic residues; that stretch reads HDDDDEEGDDD. The 64-residue stretch at 140-203 folds into the bZIP domain; sequence VAKKRRRRVR…QSLRYCLQKG (64 aa). Residues 142 to 162 form a basic motif region; it reads KKRRRRVRNRDAAVRSRERKK. Residues 168-182 form a leucine-zipper region; that stretch reads LEKKSKYLERECLRL. The chain crosses the membrane as a helical span at residues 224 to 244; that stretch reads LLLGSLLWLLGVNFICLFPYM.

The protein belongs to the bZIP family. As to quaternary structure, interacts with BZIP28. Expressed in seedlings, rosette and cauline leaves, stems, buds, flowers, siliques, immature seeds, anthers and pollen grains.

It localises to the endoplasmic reticulum membrane. The protein localises to the nucleus. Functionally, transcription factor involved in the unfolded protein response (UPR). Acts during endoplasmic reticulum stress (ER) by activating unfolded protein response (UPR) target genes via direct binding to the UPR element (UPRE). Plays a role in plant immunity and abiotic stress responses. The sequence is that of bZIP transcription factor 60 from Arabidopsis thaliana (Mouse-ear cress).